Reading from the N-terminus, the 663-residue chain is GPI mannosyltransferase 3 (663 aa).

The span at 1 to 11 (MPMSARSRRSN) shows a compositional bias: basic residues. The disordered stretch occupies residues 1-44 (MPMSARSRRSNPRLPPSPSSSSSSDAVRASPHSSPPSRLRPPSA). Residues 19–42 (SSSSSSDAVRASPHSSPPSRLRPP) are compositionally biased toward low complexity. A run of 8 helical transmembrane segments spans residues 47–67 (DVSSNILLFLIGFRLVNALTV), 110–130 (PLIFAAVYTVADLVARTLGLT), 137–157 (LLIAGPGITQAVIAAVGDFYT), 226–246 (VLAVSTVVDRFFYGFWTFPPL), 269–289 (YASQGYPLLLTTALPFTLVGL), 304–324 (GSILVQLASISLAMPATLSVI), 335–355 (LLPALHILSASPLVEFFIPAL), and 367–387 (LTLIFLLWANVAIAIYTTLFH). Residues 492–512 (HIPRRPSYATPPSSQRQPTQL) are disordered. The segment covering 501–511 (TPPSSQRQPTQ) has biased composition (polar residues).

It belongs to the glycosyltransferase 22 family. PIGB subfamily.

It localises to the endoplasmic reticulum membrane. Its pathway is glycolipid biosynthesis; glycosylphosphatidylinositol-anchor biosynthesis. In terms of biological role, mannosyltransferase involved in glycosylphosphatidylinositol-anchor biosynthesis. Transfers the third mannose to Man2-GlcN-acyl-PI during GPI precursor assembly. The polypeptide is GPI mannosyltransferase 3 (gpi10) (Emericella nidulans (strain FGSC A4 / ATCC 38163 / CBS 112.46 / NRRL 194 / M139) (Aspergillus nidulans)).